Consider the following 186-residue polypeptide: Ras-related protein rapA (186 aa).

12–19 (GSGGVGKS) contacts GTP. The short motif at 34–42 (YDPTIEDSY) is the Effector region element. Residues 59–63 (DTAGT) and 118–121 (NKCD) each bind GTP. C183 carries the post-translational modification Cysteine methyl ester. C183 carries S-geranylgeranyl cysteine lipidation. Residues 184-186 (ALL) constitute a propeptide, removed in mature form.

Belongs to the small GTPase superfamily. Ras family. Interacts with ralGDS (only when rapA is in its GTP-bound state). Interacts with the Rap guanine nucleotide exchange factor glfB.

Its subcellular location is the cell membrane. The enzyme catalyses GTP + H2O = GDP + phosphate + H(+). Its function is as follows. G protein of the Ras family that positively regulates phagocytosis and negatively regulates macropinocytosis. May be involved in the activation of guanylyl cyclase during the response to hyperosmotic conditions. Overexpressing cells generate alterations in cell shape and contractile responses. Involved in chemotaxis via regulation of the balance of Ras and Rap signaling at the leading edge of chemotaxing cells. In Dictyostelium discoideum (Social amoeba), this protein is Ras-related protein rapA (rapA).